Reading from the N-terminus, the 93-residue chain is Cobalt transport protein CbiN (93 aa).

Helical transmembrane passes span 5–25 (LILL…NHGG) and 63–83 (LLFT…LGYA).

This sequence belongs to the CbiN family. Forms an energy-coupling factor (ECF) transporter complex composed of an ATP-binding protein (A component, CbiO), a transmembrane protein (T component, CbiQ) and 2 possible substrate-capture proteins (S components, CbiM and CbiN) of unknown stoichimetry.

It localises to the cell inner membrane. Its pathway is cofactor biosynthesis; adenosylcobalamin biosynthesis. In terms of biological role, part of the energy-coupling factor (ECF) transporter complex CbiMNOQ involved in cobalt import. The chain is Cobalt transport protein CbiN from Klebsiella pneumoniae (strain 342).